The sequence spans 20 residues: T cell receptor alpha joining 3 (20 aa).

As to quaternary structure, alpha-beta TR is a heterodimer composed of an alpha and beta chain; disulfide-linked. The alpha-beta TR is associated with the transmembrane signaling CD3 coreceptor proteins to form the TR-CD3 (TcR or TCR). The assembly of alpha-beta TR heterodimers with CD3 occurs in the endoplasmic reticulum where a single alpha-beta TR heterodimer associates with one CD3D-CD3E heterodimer, one CD3G-CD3E heterodimer and one CD247 homodimer forming a stable octameric structure. CD3D-CD3E and CD3G-CD3E heterodimers preferentially associate with TR alpha and TR beta chains, respectively. The association of the CD247 homodimer is the last step of TcR assembly in the endoplasmic reticulum and is required for transport to the cell surface.

The protein localises to the cell membrane. Its function is as follows. J region of the variable domain of T cell receptor (TR) alpha chain that participates in the antigen recognition. Alpha-beta T cell receptors are antigen specific receptors which are essential to the immune response and are present on the cell surface of T lymphocytes. Recognize peptide-major histocompatibility (MH) (pMH) complexes that are displayed by antigen presenting cells (APC), a prerequisite for efficient T cell adaptive immunity against pathogens. Binding of alpha-beta TR to pMH complex initiates TR-CD3 clustering on the cell surface and intracellular activation of LCK that phosphorylates the ITAM motifs of CD3G, CD3D, CD3E and CD247 enabling the recruitment of ZAP70. In turn ZAP70 phosphorylates LAT, which recruits numerous signaling molecules to form the LAT signalosome. The LAT signalosome propagates signal branching to three major signaling pathways, the calcium, the mitogen-activated protein kinase (MAPK) kinase and the nuclear factor NF-kappa-B (NF-kB) pathways, leading to the mobilization of transcription factors that are critical for gene expression and essential for T cell growth and differentiation. The T cell repertoire is generated in the thymus, by V-(D)-J rearrangement. This repertoire is then shaped by intrathymic selection events to generate a peripheral T cell pool of self-MH restricted, non-autoaggressive T cells. Post-thymic interaction of alpha-beta TR with the pMH complexes shapes TR structural and functional avidity. The polypeptide is T cell receptor alpha joining 3 (Homo sapiens (Human)).